A 379-amino-acid polypeptide reads, in one-letter code: Cytochrome b (379 aa).

4 helical membrane passes run F34–T54, W78–I99, W114–L134, and F179–T199. The heme b site is built by H84 and H98. Heme b is bound by residues H183 and H197. H202 lines the a ubiquinone pocket. Transmembrane regions (helical) follow at residues T227–F247, L289–H309, M321–S341, and F348–P368.

The protein belongs to the cytochrome b family. The cytochrome bc1 complex contains 11 subunits: 3 respiratory subunits (MT-CYB, CYC1 and UQCRFS1), 2 core proteins (UQCRC1 and UQCRC2) and 6 low-molecular weight proteins (UQCRH/QCR6, UQCRB/QCR7, UQCRQ/QCR8, UQCR10/QCR9, UQCR11/QCR10 and a cleavage product of UQCRFS1). This cytochrome bc1 complex then forms a dimer. The cofactor is heme b.

Its subcellular location is the mitochondrion inner membrane. Component of the ubiquinol-cytochrome c reductase complex (complex III or cytochrome b-c1 complex) that is part of the mitochondrial respiratory chain. The b-c1 complex mediates electron transfer from ubiquinol to cytochrome c. Contributes to the generation of a proton gradient across the mitochondrial membrane that is then used for ATP synthesis. This is Cytochrome b (MT-CYB) from Tinamus major (Great tinamou).